A 361-amino-acid chain; its full sequence is PTI1-like tyrosine-protein kinase 1 (361 aa).

Residues 16-43 form a disordered region; that stretch reads EEQQLKSSQQQSDANHKNSKPAPVAKHE. Positions 68-350 constitute a Protein kinase domain; sequence FGSKALIGEG…IVVKALQPLL (283 aa). ATP-binding positions include 74 to 82 and Lys96; that span reads IGEGSYGRV. Asp200 (proton acceptor) is an active-site residue.

This sequence belongs to the protein kinase superfamily. Tyr protein kinase family. In terms of assembly, interacts with OXI1. In terms of processing, autophosphorylated and phosphorylated by OXI1.

The protein resides in the cell membrane. It carries out the reaction L-tyrosyl-[protein] + ATP = O-phospho-L-tyrosyl-[protein] + ADP + H(+). The sequence is that of PTI1-like tyrosine-protein kinase 1 (PTI11) from Arabidopsis thaliana (Mouse-ear cress).